Reading from the N-terminus, the 385-residue chain is Signal transduction histidine-protein kinase/phosphatase DegS (385 aa).

Residues 31–141 (QIGEQSRQQY…IERSESLVSQ (111 aa)) are a coiled coil. Ser-76 is subject to Phosphoserine. Residues 183–385 (RVSREIHDGP…FIMIKVPLSL (203 aa)) form the Histidine kinase domain. At His-189 the chain carries Phosphohistidine; by autocatalysis.

In terms of processing, autophosphorylated. Phosphorylated in vitro at Ser-76 by the serine/threonine-protein kinase YbdM, which stimulates the phosphate transfer to DegU.

It is found in the cytoplasm. It catalyses the reaction ATP + protein L-histidine = ADP + protein N-phospho-L-histidine.. Its activity is regulated as follows. Regulated via serine phosphorylation of its input domain. Phosphotransfer from DegS to DegU is stimulated by phosphorylation on Ser-76 and by DegQ. Functionally, member of the two-component regulatory system DegS/DegU, which plays an important role in the transition growth phase. Involved in the control of expression of different cellular functions, including production of degradative enzymes such as the neutral and alkaline proteases, flagellum formation and biofilm formation. Acts both as a protein kinase that undergoes autophosphorylation and subsequently transfers the phosphate to DegU, and as a protein phosphatase that dephosphorylates phospho-DegU. This is Signal transduction histidine-protein kinase/phosphatase DegS (degS) from Bacillus subtilis (strain 168).